The chain runs to 79 residues: RNA-binding protein Hfq (79 aa).

Positions 10–70 constitute a Sm domain; the sequence is DVFLNTVRKQ…ISTIMPGQPV (61 aa).

It belongs to the Hfq family. As to quaternary structure, homohexamer.

Functionally, RNA chaperone that binds small regulatory RNA (sRNAs) and mRNAs to facilitate mRNA translational regulation in response to envelope stress, environmental stress and changes in metabolite concentrations. Also binds with high specificity to tRNAs. The sequence is that of RNA-binding protein Hfq from Bartonella henselae (strain ATCC 49882 / DSM 28221 / CCUG 30454 / Houston 1) (Rochalimaea henselae).